A 319-amino-acid polypeptide reads, in one-letter code: ATP-dependent 6-phosphofructokinase (319 aa).

ATP is bound at residue G11. 21 to 25 (RAVVR) lines the ADP pocket. ATP is bound by residues 72 to 73 (RC) and 102 to 105 (GDGS). Mg(2+) is bound at residue D103. Position 125–127 (125–127 (TID)) interacts with substrate. The active-site Proton acceptor is the D127. Residue R154 participates in ADP binding. Residues R162 and 169–171 (MGR) contribute to the substrate site. ADP is bound by residues 185–187 (GAE), R211, and 213–215 (KKH). Substrate-binding positions include E222, R243, and 249–252 (HVQR).

Belongs to the phosphofructokinase type A (PFKA) family. ATP-dependent PFK group I subfamily. Prokaryotic clade 'B1' sub-subfamily. As to quaternary structure, homotetramer. It depends on Mg(2+) as a cofactor.

Its subcellular location is the cytoplasm. The enzyme catalyses beta-D-fructose 6-phosphate + ATP = beta-D-fructose 1,6-bisphosphate + ADP + H(+). Its pathway is carbohydrate degradation; glycolysis; D-glyceraldehyde 3-phosphate and glycerone phosphate from D-glucose: step 3/4. Its activity is regulated as follows. Allosterically activated by ADP and other diphosphonucleosides, and allosterically inhibited by phosphoenolpyruvate. Its function is as follows. Catalyzes the phosphorylation of D-fructose 6-phosphate to fructose 1,6-bisphosphate by ATP, the first committing step of glycolysis. The chain is ATP-dependent 6-phosphofructokinase from Bacillus cytotoxicus (strain DSM 22905 / CIP 110041 / 391-98 / NVH 391-98).